A 214-amino-acid polypeptide reads, in one-letter code: tRNA (guanine-N(7)-)-methyltransferase (214 aa).

Glu44, Glu69, Asp96, and Asp118 together coordinate S-adenosyl-L-methionine. The active site involves Asp118. Substrate-binding positions include Lys122, Asp154, and 191-194; that span reads TEYE.

It belongs to the class I-like SAM-binding methyltransferase superfamily. TrmB family.

It catalyses the reaction guanosine(46) in tRNA + S-adenosyl-L-methionine = N(7)-methylguanosine(46) in tRNA + S-adenosyl-L-homocysteine. It functions in the pathway tRNA modification; N(7)-methylguanine-tRNA biosynthesis. Catalyzes the formation of N(7)-methylguanine at position 46 (m7G46) in tRNA. This Listeria monocytogenes serotype 4a (strain HCC23) protein is tRNA (guanine-N(7)-)-methyltransferase.